We begin with the raw amino-acid sequence, 758 residues long: Translation initiation factor IF-2 (758 aa).

Residues 55–168 form a disordered region; that stretch reads EKNVGKQATQ…KTHQPSIPVK (114 aa). Composition is skewed to polar residues over residues 60 to 78 and 86 to 95; these read KQATQNISQKSQSNGQQNH and QRQQSATSKP. Low complexity predominate over residues 96-136; the sequence is KVNNQQHSNSSNEKSKNTKGNQNRNMTQNNNNNNNNNNNNR. The region spanning 259-428 is the tr-type G domain; it reads ERPPVVTIMG…LLVAEVGELK (170 aa). Residues 268-275 are G1; it reads GHVDHGKT. 268–275 provides a ligand contact to GTP; sequence GHVDHGKT. Positions 293 to 297 are G2; that stretch reads GITQH. Residues 314–317 are G3; it reads DTPG. Residues 314-318 and 368-371 contribute to the GTP site; these read DTPGH and NKMD. Positions 368–371 are G4; it reads NKMD. Residues 404–406 form a G5 region; sequence SAL.

This sequence belongs to the TRAFAC class translation factor GTPase superfamily. Classic translation factor GTPase family. IF-2 subfamily.

Its subcellular location is the cytoplasm. In terms of biological role, one of the essential components for the initiation of protein synthesis. Protects formylmethionyl-tRNA from spontaneous hydrolysis and promotes its binding to the 30S ribosomal subunits. Also involved in the hydrolysis of GTP during the formation of the 70S ribosomal complex. The protein is Translation initiation factor IF-2 of Lysinibacillus sphaericus (strain C3-41).